The following is a 423-amino-acid chain: Mitogen-activated protein kinase 9 (423 aa).

Positions 26-321 constitute a Protein kinase domain; that stretch reads YQQLKPIGSG…VDEALRHPYI (296 aa). ATP-binding positions include 32-40 and K55; that span reads IGSGAQGIV. The active-site Proton acceptor is D151. T183 is subject to Phosphothreonine; by MAP2K7. The TXY motif lies at 183–185; that stretch reads TPY. Y185 is modified (phosphotyrosine; by MAP2K4). Basic and acidic residues predominate over residues 366-375; it reads RSKNGVKDQP. The interval 366–423 is disordered; that stretch reads RSKNGVKDQPSDAAVSSKATPSQSSSINDISSMSTEHTLASDTDSSLDASTGPLEGCR. Residues 387–416 are compositionally biased toward low complexity; sequence SQSSSINDISSMSTEHTLASDTDSSLDAST.

Belongs to the protein kinase superfamily. CMGC Ser/Thr protein kinase family. MAP kinase subfamily. As to quaternary structure, interacts with MECOM. Binds to at least four scaffolding proteins, MAPK8IP1/JIP-1, MAPK8IP2/JIP-2, MAPK8IP3/JIP-3/JSAP1 and SPAG9/MAPK8IP4/JIP-4. These proteins also bind other components of the JNK signaling pathway. Interacts with NFATC4. Interacts with ATF7; the interaction does not phosphorylate ATF7 but acts as a docking site for ATF7-associated partners such as JUN. Interacts with BCL10. Interacts with CTNNB1 and GSK3B. Interacts with DCLK2. Interacts with MAPKBP1. Interacts with POU5F1; phosphorylates POU5F1 at 'Ser-347'. Found in a complex with SH3RF1, RAC2, MAP3K7/TAK1, MAP2K7/MKK7, MAPK8IP1/JIP1 and MAPK8/JNK1. The cofactor is Mg(2+). In terms of processing, dually phosphorylated on Thr-183 and Tyr-185 by MAP2K7 and MAP2K4, which activates the enzyme. Autophosphorylated in vitro.

Its subcellular location is the cytoplasm. It is found in the nucleus. The enzyme catalyses L-seryl-[protein] + ATP = O-phospho-L-seryl-[protein] + ADP + H(+). The catalysed reaction is L-threonyl-[protein] + ATP = O-phospho-L-threonyl-[protein] + ADP + H(+). With respect to regulation, activated by threonine and tyrosine phosphorylation by either of two dual specificity kinases, MAP2K4 and MAP2K7. MAP2K4 shows a strong preference for Tyr-185 while MAP2K7 phosphorylates Tyr-183 preferentially. Inhibited by dual specificity phosphatases, such as DUSP1. Serine/threonine-protein kinase involved in various processes such as cell proliferation, differentiation, migration, transformation and programmed cell death. Extracellular stimuli such as pro-inflammatory cytokines or physical stress stimulate the stress-activated protein kinase/c-Jun N-terminal kinase (SAP/JNK) signaling pathway. In this cascade, two dual specificity kinases MAP2K4/MKK4 and MAP2K7/MKK7 phosphorylate and activate MAPK9/JNK2. In turn, MAPK9/JNK2 phosphorylates a number of transcription factors, primarily components of AP-1 such as JUN and ATF2 and thus regulates AP-1 transcriptional activity. In response to oxidative or ribotoxic stresses, inhibits rRNA synthesis by phosphorylating and inactivating the RNA polymerase 1-specific transcription initiation factor RRN3. Promotes stressed cell apoptosis by phosphorylating key regulatory factors including TP53 and YAP1. In T-cells, MAPK8 and MAPK9 are required for polarized differentiation of T-helper cells into Th1 cells. Upon T-cell receptor (TCR) stimulation, is activated by CARMA1, BCL10, MAP2K7 and MAP3K7/TAK1 to regulate JUN protein levels. Plays an important role in the osmotic stress-induced epithelial tight-junctions disruption. When activated, promotes beta-catenin/CTNNB1 degradation and inhibits the canonical Wnt signaling pathway. Also participates in neurite growth in spiral ganglion neurons. Phosphorylates the CLOCK-BMAL1 heterodimer and plays a role in the regulation of the circadian clock. Phosphorylates POU5F1, which results in the inhibition of POU5F1's transcriptional activity and enhances its proteasomal degradation. Phosphorylates ALKBH5 in response to reactive oxygen species (ROS), promoting ALKBH5 sumoylation and inactivation. This is Mitogen-activated protein kinase 9 (Mapk9) from Rattus norvegicus (Rat).